We begin with the raw amino-acid sequence, 326 residues long: Glycerol-3-phosphate dehydrogenase [NAD(P)+] (326 aa).

NADPH-binding residues include Trp13, Arg33, and Lys107. Sn-glycerol 3-phosphate contacts are provided by Lys107, Gly135, and Ser137. Ala139 is a binding site for NADPH. Positions 190, 243, 253, 254, and 255 each coordinate sn-glycerol 3-phosphate. Lys190 (proton acceptor) is an active-site residue. Residue Arg254 participates in NADPH binding. Positions 273 and 275 each coordinate NADPH.

It belongs to the NAD-dependent glycerol-3-phosphate dehydrogenase family.

It localises to the cytoplasm. It catalyses the reaction sn-glycerol 3-phosphate + NAD(+) = dihydroxyacetone phosphate + NADH + H(+). The enzyme catalyses sn-glycerol 3-phosphate + NADP(+) = dihydroxyacetone phosphate + NADPH + H(+). It participates in membrane lipid metabolism; glycerophospholipid metabolism. In terms of biological role, catalyzes the reduction of the glycolytic intermediate dihydroxyacetone phosphate (DHAP) to sn-glycerol 3-phosphate (G3P), the key precursor for phospholipid synthesis. The protein is Glycerol-3-phosphate dehydrogenase [NAD(P)+] of Brucella abortus (strain 2308).